The sequence spans 280 residues: Tryptophan 2,3-dioxygenase (280 aa).

Substrate-binding positions include F49–H53, Y111, and R115. H238 contacts heme. T252 serves as a coordination point for substrate.

Belongs to the tryptophan 2,3-dioxygenase family. As to quaternary structure, homotetramer. The cofactor is heme.

The catalysed reaction is L-tryptophan + O2 = N-formyl-L-kynurenine. The protein operates within amino-acid degradation; L-tryptophan degradation via kynurenine pathway; L-kynurenine from L-tryptophan: step 1/2. Functionally, heme-dependent dioxygenase that catalyzes the oxidative cleavage of the L-tryptophan (L-Trp) pyrrole ring and converts L-tryptophan to N-formyl-L-kynurenine. Catalyzes the oxidative cleavage of the indole moiety. The chain is Tryptophan 2,3-dioxygenase from Geobacillus thermodenitrificans (strain NG80-2).